Consider the following 331-residue polypeptide: CRISPR-associated endonuclease Cas1 (331 aa).

Residues E166, H228, and D243 each contribute to the Mn(2+) site.

This sequence belongs to the CRISPR-associated endonuclease Cas1 family. Homodimer, forms a heterotetramer with a Cas2 homodimer. Mg(2+) serves as cofactor. Mn(2+) is required as a cofactor.

Its function is as follows. CRISPR (clustered regularly interspaced short palindromic repeat), is an adaptive immune system that provides protection against mobile genetic elements (viruses, transposable elements and conjugative plasmids). CRISPR clusters contain spacers, sequences complementary to antecedent mobile elements, and target invading nucleic acids. CRISPR clusters are transcribed and processed into CRISPR RNA (crRNA). Acts as a dsDNA endonuclease. Involved in the integration of spacer DNA into the CRISPR cassette. The chain is CRISPR-associated endonuclease Cas1 from Hyperthermus butylicus (strain DSM 5456 / JCM 9403 / PLM1-5).